The sequence spans 131 residues: Profilin-2 (131 aa).

This sequence belongs to the profilin family. As to quaternary structure, occurs in many kinds of cells as a complex with monomeric actin in a 1:1 ratio. In terms of tissue distribution, expressed in vascular bundles of roots, hypocotyls, cotyledons, leaves, sepals, petals, stamen filaments and stalks of developing seeds. Expressed in leaf epidermal cells, trichomes and stem epidermal cells. Detected in phloem exudates (at protein level).

Its subcellular location is the cytoplasm. The protein resides in the cytoskeleton. It is found in the endoplasmic reticulum. It localises to the cytosol. The protein localises to the nucleus. Binds to actin monomers and regulates the organization of the actin cytoskeleton. At high concentrations, profilin prevents the polymerization of actin, whereas it enhances it at low concentrations. At low concentrations, associates with the poly-proline motif of formins to enhance actin filament elongation rate. Binds G-actin and poly-L-proline with low affinity in vitro. Binds ACT1, ACT7 and ACT11 and inhibits actin polymerization. May be involved in the cross-talk between vesicular trafficking and the actin cytoskeleton. Inhibits cell growth of various pathogenic fungal strains. May play a role as antifungal proteins in the defense system against fungal pathogen attacks. The chain is Profilin-2 from Arabidopsis thaliana (Mouse-ear cress).